The primary structure comprises 22 residues: Mu-conotoxin MIIIA (22 aa).

Gln1 bears the Pyrrolidone carboxylic acid mark. 3 disulfides stabilise this stretch: Cys3–Cys15, Cys4–Cys21, and Cys10–Cys22. Cys22 bears the Cysteine amide mark.

It belongs to the conotoxin M superfamily. In terms of tissue distribution, expressed by the venom duct.

It localises to the secreted. Mu-conotoxins block voltage-gated sodium channels (Nav). This synthetic toxin potently blocks rNav1.3/SCN3A. It also moderately blocks rNav1.1/SCN1A, rNav1.2/SCN2A, rNav1.4/SCN4A, mNav1.6/SCN8A, and Nav1.7/SCN9A. sodium channels. This block is very slowly reversible. This chain is Mu-conotoxin MIIIA, found in Conus magus (Magical cone).